The sequence spans 174 residues: Endoribonuclease YbeY (174 aa).

Zn(2+) contacts are provided by H129, H133, and H139.

It belongs to the endoribonuclease YbeY family. Zn(2+) is required as a cofactor.

The protein localises to the cytoplasm. Functionally, single strand-specific metallo-endoribonuclease involved in late-stage 70S ribosome quality control and in maturation of the 3' terminus of the 16S rRNA. The chain is Endoribonuclease YbeY from Lactobacillus delbrueckii subsp. bulgaricus (strain ATCC BAA-365 / Lb-18).